A 305-amino-acid polypeptide reads, in one-letter code: tRNA dimethylallyltransferase (305 aa).

11–18 (GPTAVGKT) is an ATP binding site. 13 to 18 (TAVGKT) is a binding site for substrate. Residues 36–39 (DSMQ) form an interaction with substrate tRNA region.

It belongs to the IPP transferase family. In terms of assembly, monomer. Requires Mg(2+) as cofactor.

It catalyses the reaction adenosine(37) in tRNA + dimethylallyl diphosphate = N(6)-dimethylallyladenosine(37) in tRNA + diphosphate. In terms of biological role, catalyzes the transfer of a dimethylallyl group onto the adenine at position 37 in tRNAs that read codons beginning with uridine, leading to the formation of N6-(dimethylallyl)adenosine (i(6)A). The sequence is that of tRNA dimethylallyltransferase from Listeria monocytogenes serovar 1/2a (strain ATCC BAA-679 / EGD-e).